Here is a 494-residue protein sequence, read N- to C-terminus: MTSPQPTETADVVLVGAGIMSATLATLLNDLQPEWRMLVLERLDAAGLESSNAWNNAGTGHSALCELNYAPQAADGTVSAEKALTINEQFQVTRQMWSSLVENGTLEDPNTFINPVPHVSMVFGDDHADYLRARYDAFKPNKLFERMEFTEDRDLIAQWAPLTMHGRGAGRVAATFAPEGTDVDFGALTNQLLNHLQGRNITVEYGQEVTTLDRQSDGSWLVSVVDRLNSDNNRVIRAGFVFLGAGGGALPLLQKSKIKEAKGYGGFPVSGLFLRNTDPTVTAQHNAKVYGQASVGAPPMSVPHLDTRYVNGRRAIMFGPYGGFKPNFLKHGSLLDLPKSVRAHNLYPMTRAGMANLDLVKYLVGELTKTRSQRIDALHEYYPTAEESQWELIEAGQRVQVMKSDPQKGGVLQFGTELVTSADGSIGALLGASPGASTAVPIMLNLLSKCFPAKMSEWEPRIKELIPAYGRKLNDDPRLTDEIMGHTASVLGIK.

The protein belongs to the MQO family. The cofactor is FAD.

It catalyses the reaction (S)-malate + a quinone = a quinol + oxaloacetate. The protein operates within carbohydrate metabolism; tricarboxylic acid cycle; oxaloacetate from (S)-malate (quinone route): step 1/1. The protein is Probable malate:quinone oxidoreductase of Kocuria rhizophila (strain ATCC 9341 / DSM 348 / NBRC 103217 / DC2201).